The primary structure comprises 321 residues: Probable pectate lyase A (321 aa).

A signal peptide spans 1–18; that stretch reads MKFVATLIACGLSGLALA. An N-linked (GlcNAc...) asparagine glycan is attached at asparagine 93. The Ca(2+) site is built by aspartate 134, aspartate 163, and aspartate 167. Residue arginine 220 is part of the active site. Residue asparagine 238 is glycosylated (N-linked (GlcNAc...) asparagine).

It belongs to the polysaccharide lyase 1 family. Requires Ca(2+) as cofactor.

The protein localises to the secreted. It carries out the reaction Eliminative cleavage of (1-&gt;4)-alpha-D-galacturonan to give oligosaccharides with 4-deoxy-alpha-D-galact-4-enuronosyl groups at their non-reducing ends.. Its function is as follows. Pectinolytic enzyme consist of four classes of enzymes: pectin lyase, polygalacturonase, pectin methylesterase and rhamnogalacturonase. Among pectinolytic enzymes, pectin lyase is the most important in depolymerization of pectin, since it cleaves internal glycosidic bonds of highly methylated pectins. Favors pectate, the anion, over pectin, the methyl ester. The sequence is that of Probable pectate lyase A (plyA) from Aspergillus fumigatus (strain ATCC MYA-4609 / CBS 101355 / FGSC A1100 / Af293) (Neosartorya fumigata).